We begin with the raw amino-acid sequence, 431 residues long: Adenylosuccinate synthetase (431 aa).

GTP contacts are provided by residues 13–19 (GDEGKGK) and 41–43 (GHT). Catalysis depends on Asp14, which acts as the Proton acceptor. Residues Asp14 and Gly41 each contribute to the Mg(2+) site. Residues 14-17 (DEGK), 39-42 (NAGH), Thr130, Arg144, Gln225, Thr240, and Arg304 contribute to the IMP site. His42 (proton donor) is an active-site residue. 300-306 (ATTGRER) contributes to the substrate binding site. GTP is bound by residues Arg306, 332 to 334 (KLD), and 415 to 417 (STG).

Belongs to the adenylosuccinate synthetase family. As to quaternary structure, homodimer. Mg(2+) is required as a cofactor.

Its subcellular location is the cytoplasm. It carries out the reaction IMP + L-aspartate + GTP = N(6)-(1,2-dicarboxyethyl)-AMP + GDP + phosphate + 2 H(+). It functions in the pathway purine metabolism; AMP biosynthesis via de novo pathway; AMP from IMP: step 1/2. Its function is as follows. Plays an important role in the de novo pathway of purine nucleotide biosynthesis. Catalyzes the first committed step in the biosynthesis of AMP from IMP. The protein is Adenylosuccinate synthetase of Colwellia psychrerythraea (strain 34H / ATCC BAA-681) (Vibrio psychroerythus).